The chain runs to 840 residues: Homeobox-leucine zipper protein HOX9 (840 aa).

Disordered regions lie at residues 1-26 and 135-160; these read MAAA…AGMD and NPSL…DASN. Residues 12–21 are compositionally biased toward gly residues; the sequence is GSDGGGGGYD. A DNA-binding region (homeobox) is located at residues 26-89; that stretch reads DSGKYVRYTP…NRRCRDKQRK (64 aa). Positions 86–135 form a coiled coil; that stretch reads KQRKEASRLQAVNRKLTAMNKLLMEENERLQKQVSQLVHENAYMKQQLQN. The START domain maps to 157-385; sequence DASNPSGLLT…IAQETSGEVV (229 aa).

This sequence belongs to the HD-ZIP homeobox family. Class III subfamily. As to expression, expressed in seedlings, roots, stems, leaf sheaths and blades and panicles.

The protein resides in the nucleus. In terms of biological role, probable transcription factor. In Oryza sativa subsp. japonica (Rice), this protein is Homeobox-leucine zipper protein HOX9 (HOX9).